The primary structure comprises 444 residues: Serine carboxypeptidase 2 (444 aa).

60 to 62 (NGG) lines the substrate pocket. Intrachain disulfides connect cysteine 65–cysteine 324, cysteine 222–cysteine 234, and cysteine 258–cysteine 291. Asparagine 116 and asparagine 127 each carry an N-linked (GlcNAc...) asparagine glycan. 157-159 (ESY) is a binding site for substrate. Residue serine 158 is part of the active site. Asparagine 259 carries N-linked (GlcNAc...) asparagine glycosylation. The propeptide at 260–286 (ITSSSSSSSSSLSQQRRSRGRYPWLTG) is linker peptide. N-linked (GlcNAc...) asparagine glycosylation is found at asparagine 312 and asparagine 318. Catalysis depends on residues aspartate 361 and histidine 413. A substrate-binding site is contributed by 409–413 (RGAGH).

The protein belongs to the peptidase S10 family. As to quaternary structure, carboxypeptidase II is a dimer, where each monomer is composed of two chains linked by a disulfide bond. N-glycosylated.

The catalysed reaction is Preferential release of a C-terminal arginine or lysine residue.. This chain is Serine carboxypeptidase 2 (CBP2), found in Triticum aestivum (Wheat).